A 222-amino-acid polypeptide reads, in one-letter code: ER membrane protein complex subunit 7 homolog (222 aa).

The N-terminal stretch at Met1–Ala16 is a signal peptide. At Thr17–Asp145 the chain is on the extracellular side. A helical transmembrane segment spans residues Met146–Pro166. The Cytoplasmic portion of the chain corresponds to Lys167–Lys222.

Belongs to the EMC7 family.

The protein resides in the membrane. The protein is ER membrane protein complex subunit 7 homolog of Caenorhabditis elegans.